The following is a 154-amino-acid chain: CASP-like protein ARALYDRAFT_485429 (154 aa).

Residues 1–12 are Cytoplasmic-facing; sequence MENVPGSFGTSA. Residues 13–33 form a helical membrane-spanning segment; the sequence is SFALRFGQTIFSAASLIFMCF. The Extracellular portion of the chain corresponds to 34-41; that stretch reads DYDFYDFT. A helical transmembrane segment spans residues 42-62; it reads TFCYLATVMAIVTPWSILLAL. Residues 63 to 81 lie on the Cytoplasmic side of the membrane; the sequence is TDTYSVLVKLLPQELRVLS. A helical membrane pass occupies residues 82–102; sequence IVFAGDFVLSFLSLGGACAVA. The Extracellular segment spans residues 103–128; the sequence is SATELLASADGKICDGNLCIQYQVSA. A helical membrane pass occupies residues 129–149; that stretch reads ALAFLCWFLLLASALFNFWSL. Residues 150–154 lie on the Cytoplasmic side of the membrane; it reads PSLYY.

The protein belongs to the Casparian strip membrane proteins (CASP) family. As to quaternary structure, homodimer and heterodimers.

The protein resides in the cell membrane. The polypeptide is CASP-like protein ARALYDRAFT_485429 (Arabidopsis lyrata subsp. lyrata (Lyre-leaved rock-cress)).